We begin with the raw amino-acid sequence, 137 residues long: Small ribosomal subunit protein uS12 (137 aa).

The disordered stretch occupies residues 1–55 (MPTINQLVRKPRQSKIKKSDSPALNKGFNSKKKKFTDLNSPQKRGVCTRVGTMTP). Residue aspartate 102 is modified to 3-methylthioaspartic acid. The segment at 118–137 (SGVDGRRQGRSLYGTKKPKN) is disordered.

Belongs to the universal ribosomal protein uS12 family. Part of the 30S ribosomal subunit. Contacts proteins S8 and S17. May interact with IF1 in the 30S initiation complex.

With S4 and S5 plays an important role in translational accuracy. In terms of biological role, interacts with and stabilizes bases of the 16S rRNA that are involved in tRNA selection in the A site and with the mRNA backbone. Located at the interface of the 30S and 50S subunits, it traverses the body of the 30S subunit contacting proteins on the other side and probably holding the rRNA structure together. The combined cluster of proteins S8, S12 and S17 appears to hold together the shoulder and platform of the 30S subunit. The sequence is that of Small ribosomal subunit protein uS12 from Staphylococcus aureus (strain Mu3 / ATCC 700698).